The primary structure comprises 154 residues: Ribonuclease HI (154 aa).

The RNase H type-1 domain occupies 1 to 142; the sequence is MQKQIEIFTD…CDQLAKAGAE (142 aa). Positions 10, 48, 70, and 134 each coordinate Mg(2+).

It belongs to the RNase H family. As to quaternary structure, monomer. The cofactor is Mg(2+).

Its subcellular location is the cytoplasm. The enzyme catalyses Endonucleolytic cleavage to 5'-phosphomonoester.. In terms of biological role, endonuclease that specifically degrades the RNA of RNA-DNA hybrids. The protein is Ribonuclease HI (rnhA) of Pasteurella multocida (strain Pm70).